Reading from the N-terminus, the 150-residue chain is SsrA-binding protein (150 aa).

The protein belongs to the SmpB family.

The protein localises to the cytoplasm. Functionally, required for rescue of stalled ribosomes mediated by trans-translation. Binds to transfer-messenger RNA (tmRNA), required for stable association of tmRNA with ribosomes. tmRNA and SmpB together mimic tRNA shape, replacing the anticodon stem-loop with SmpB. tmRNA is encoded by the ssrA gene; the 2 termini fold to resemble tRNA(Ala) and it encodes a 'tag peptide', a short internal open reading frame. During trans-translation Ala-aminoacylated tmRNA acts like a tRNA, entering the A-site of stalled ribosomes, displacing the stalled mRNA. The ribosome then switches to translate the ORF on the tmRNA; the nascent peptide is terminated with the 'tag peptide' encoded by the tmRNA and targeted for degradation. The ribosome is freed to recommence translation, which seems to be the essential function of trans-translation. The sequence is that of SsrA-binding protein from Nitratiruptor sp. (strain SB155-2).